We begin with the raw amino-acid sequence, 516 residues long: Cytochrome P450 1A2 (516 aa).

O-linked (GlcNAc) serine glycosylation occurs at Ser69. Phe226 serves as a coordination point for substrate. Residue Cys458 participates in heme binding.

Belongs to the cytochrome P450 family. Interacts with PGRMC1; the interaction requires PGRMC1 homodimerization. It depends on heme as a cofactor.

Its subcellular location is the endoplasmic reticulum membrane. It localises to the microsome membrane. The catalysed reaction is an organic molecule + reduced [NADPH--hemoprotein reductase] + O2 = an alcohol + oxidized [NADPH--hemoprotein reductase] + H2O + H(+). It catalyses the reaction 17beta-estradiol + reduced [NADPH--hemoprotein reductase] + O2 = 2-hydroxy-17beta-estradiol + oxidized [NADPH--hemoprotein reductase] + H2O + H(+). It carries out the reaction 17beta-estradiol + reduced [NADPH--hemoprotein reductase] + O2 = 4-hydroxy-17beta-estradiol + oxidized [NADPH--hemoprotein reductase] + H2O + H(+). The enzyme catalyses estrone + reduced [NADPH--hemoprotein reductase] + O2 = 2-hydroxyestrone + oxidized [NADPH--hemoprotein reductase] + H2O + H(+). The catalysed reaction is estrone + reduced [NADPH--hemoprotein reductase] + O2 = 4-hydroxyestrone + oxidized [NADPH--hemoprotein reductase] + H2O + H(+). It catalyses the reaction cholesterol + reduced [NADPH--hemoprotein reductase] + O2 = 25-hydroxycholesterol + oxidized [NADPH--hemoprotein reductase] + H2O + H(+). It carries out the reaction all-trans-retinol + reduced [NADPH--hemoprotein reductase] + O2 = all-trans-retinal + oxidized [NADPH--hemoprotein reductase] + 2 H2O + H(+). The enzyme catalyses all-trans-retinal + reduced [NADPH--hemoprotein reductase] + O2 = all-trans-retinoate + oxidized [NADPH--hemoprotein reductase] + H2O + 2 H(+). The catalysed reaction is (5Z,8Z,11Z,14Z)-eicosatetraenoate + reduced [NADPH--hemoprotein reductase] + O2 = (14R,15S)-epoxy-(5Z,8Z,11Z)-eicosatrienoate + oxidized [NADPH--hemoprotein reductase] + H2O + H(+). It catalyses the reaction (5Z,8Z,11Z,14Z)-eicosatetraenoate + reduced [NADPH--hemoprotein reductase] + O2 = (14S,15R)-epoxy-(5Z,8Z,11Z)-eicosatrienoate + oxidized [NADPH--hemoprotein reductase] + H2O + H(+). It carries out the reaction (5Z,8Z,11Z,14Z,17Z)-eicosapentaenoate + reduced [NADPH--hemoprotein reductase] + O2 = (17R,18S)-epoxy-(5Z,8Z,11Z,14Z)-eicosatetraenoate + oxidized [NADPH--hemoprotein reductase] + H2O + H(+). The enzyme catalyses (4Z,7Z,10Z,13Z,16Z,19Z)-docosahexaenoate + reduced [NADPH--hemoprotein reductase] + O2 = (19R,20S)-epoxy-(4Z,7Z,10Z,13Z,16Z)-docosapentaenoate + oxidized [NADPH--hemoprotein reductase] + H2O + H(+). The catalysed reaction is (5S)-hydroperoxy-(6E,8Z,11Z,14Z)-eicosatetraenoate = 5-oxo-(6E,8Z,11Z,14Z)-eicosatetraenoate + H2O. It catalyses the reaction (12S)-hydroperoxy-(5Z,8Z,10E,14Z)-eicosatetraenoate = 12-oxo-(5Z,8Z,10E,14Z)-eicosatetraenoate + H2O. It carries out the reaction (15S)-hydroperoxy-(5Z,8Z,11Z,13E)-eicosatetraenoate = 15-oxo-(5Z,8Z,11Z,13E)-eicosatetraenoate + H2O. The enzyme catalyses (13S)-hydroperoxy-(9Z,11E)-octadecadienoate = 13-oxo-(9Z,11E)-octadecadienoate + H2O. The catalysed reaction is (5Z,8Z,11Z,14Z)-eicosatetraenoate + reduced [NADPH--hemoprotein reductase] + O2 = 13-hydroxy-(5Z,8Z,11Z,14Z)-eicosatetraenoate + oxidized [NADPH--hemoprotein reductase] + H2O + H(+). It catalyses the reaction (5Z,8Z,11Z,14Z)-eicosatetraenoate + reduced [NADPH--hemoprotein reductase] + O2 = 19-hydroxy-(5Z,8Z,11Z,14Z)-eicosatetraenoate + oxidized [NADPH--hemoprotein reductase] + H2O + H(+). It carries out the reaction (9Z,12Z)-octadecadienoate + reduced [NADPH--hemoprotein reductase] + O2 = 11-hydroxy-(9Z,12Z)-octadecadienoate + oxidized [NADPH--hemoprotein reductase] + H2O + H(+). The protein operates within cofactor metabolism; retinol metabolism. It participates in steroid metabolism; cholesterol metabolism. It functions in the pathway lipid metabolism; arachidonate metabolism. Its function is as follows. A cytochrome P450 monooxygenase involved in the metabolism of various endogenous substrates, including fatty acids, steroid hormones and vitamins. Mechanistically, uses molecular oxygen inserting one oxygen atom into a substrate, and reducing the second into a water molecule, with two electrons provided by NADPH via cytochrome P450 reductase (NADPH--hemoprotein reductase). Catalyzes the hydroxylation of carbon-hydrogen bonds. Exhibits high catalytic activity for the formation of hydroxyestrogens from estrone (E1) and 17beta-estradiol (E2), namely 2-hydroxy E1 and E2. Metabolizes cholesterol toward 25-hydroxycholesterol, a physiological regulator of cellular cholesterol homeostasis. May act as a major enzyme for all-trans retinoic acid biosynthesis in the liver. Catalyzes two successive oxidative transformation of all-trans retinol to all-trans retinal and then to the active form all-trans retinoic acid. Primarily catalyzes stereoselective epoxidation of the last double bond of polyunsaturated fatty acids (PUFA), displaying a strong preference for the (R,S) stereoisomer. Catalyzes bisallylic hydroxylation and omega-1 hydroxylation of PUFA. May also participate in eicosanoids metabolism by converting hydroperoxide species into oxo metabolites (lipoxygenase-like reaction, NADPH-independent). Plays a role in the oxidative metabolism of xenobiotics. Catalyzes the N-hydroxylation of heterocyclic amines and the O-deethylation of phenacetin. Metabolizes caffeine via N3-demethylation. In Pongo abelii (Sumatran orangutan), this protein is Cytochrome P450 1A2 (CYP1A2).